The chain runs to 188 residues: Peptidyl-tRNA hydrolase (188 aa).

Tyr14 is a binding site for tRNA. Residue His19 is the Proton acceptor of the active site. TRNA is bound by residues Phe64, Asn66, and Asn112.

It belongs to the PTH family. Monomer.

The protein localises to the cytoplasm. The catalysed reaction is an N-acyl-L-alpha-aminoacyl-tRNA + H2O = an N-acyl-L-amino acid + a tRNA + H(+). Hydrolyzes ribosome-free peptidyl-tRNAs (with 1 or more amino acids incorporated), which drop off the ribosome during protein synthesis, or as a result of ribosome stalling. Functionally, catalyzes the release of premature peptidyl moieties from peptidyl-tRNA molecules trapped in stalled 50S ribosomal subunits, and thus maintains levels of free tRNAs and 50S ribosomes. The chain is Peptidyl-tRNA hydrolase from Enterococcus faecalis (strain ATCC 700802 / V583).